Consider the following 180-residue polypeptide: Large ribosomal subunit protein uL5 (180 aa).

This sequence belongs to the universal ribosomal protein uL5 family. As to quaternary structure, part of the 50S ribosomal subunit; part of the 5S rRNA/L5/L18/L25 subcomplex. Contacts the 5S rRNA and the P site tRNA. Forms a bridge to the 30S subunit in the 70S ribosome.

This is one of the proteins that bind and probably mediate the attachment of the 5S RNA into the large ribosomal subunit, where it forms part of the central protuberance. In the 70S ribosome it contacts protein S13 of the 30S subunit (bridge B1b), connecting the 2 subunits; this bridge is implicated in subunit movement. Contacts the P site tRNA; the 5S rRNA and some of its associated proteins might help stabilize positioning of ribosome-bound tRNAs. This chain is Large ribosomal subunit protein uL5, found in Chlamydia caviae (strain ATCC VR-813 / DSM 19441 / 03DC25 / GPIC) (Chlamydophila caviae).